The chain runs to 141 residues: Large ribosomal subunit protein uL11 (141 aa).

This sequence belongs to the universal ribosomal protein uL11 family. In terms of assembly, part of the ribosomal stalk of the 50S ribosomal subunit. Interacts with L10 and the large rRNA to form the base of the stalk. L10 forms an elongated spine to which L12 dimers bind in a sequential fashion forming a multimeric L10(L12)X complex. One or more lysine residues are methylated.

Its function is as follows. Forms part of the ribosomal stalk which helps the ribosome interact with GTP-bound translation factors. The chain is Large ribosomal subunit protein uL11 from Limosilactobacillus reuteri (strain DSM 20016) (Lactobacillus reuteri).